The following is a 240-amino-acid chain: Uridylate kinase (240 aa).

Position 12–15 (12–15) interacts with ATP; sequence KLSG. UMP is bound at residue Gly54. ATP contacts are provided by Gly55 and Arg59. UMP-binding positions include Asp74 and 135–142; that span reads TGNPFFTT. Thr162, Tyr168, and Asp171 together coordinate ATP.

The protein belongs to the UMP kinase family. As to quaternary structure, homohexamer.

The protein resides in the cytoplasm. The catalysed reaction is UMP + ATP = UDP + ADP. The protein operates within pyrimidine metabolism; CTP biosynthesis via de novo pathway; UDP from UMP (UMPK route): step 1/1. Inhibited by UTP. Functionally, catalyzes the reversible phosphorylation of UMP to UDP. This Xanthomonas euvesicatoria pv. vesicatoria (strain 85-10) (Xanthomonas campestris pv. vesicatoria) protein is Uridylate kinase.